We begin with the raw amino-acid sequence, 208 residues long: MAIYKQITAEQVEALCSGFYAGVDEVGRGPLVGDVVTAAVVLDPNNPIEGLNDSKKLSEKKRDALYEEILAKALDVSVGRCSPLEIDELNILHATMLAMQRAVAGLRARPDRVLIDGNRVPDFTDETLEGHAVIKGDGLIPAISAASIVAKVVRDREMEALDERYPEYGFAKHKGYPTKAHFEALEAHGVLAEHRKSFRPVKERLEAC.

The region spanning 18 to 208 (GFYAGVDEVG…RPVKERLEAC (191 aa)) is the RNase H type-2 domain. Residues D24, E25, and D116 each contribute to the a divalent metal cation site.

The protein belongs to the RNase HII family. Mn(2+) serves as cofactor. Requires Mg(2+) as cofactor.

The protein resides in the cytoplasm. The catalysed reaction is Endonucleolytic cleavage to 5'-phosphomonoester.. Endonuclease that specifically degrades the RNA of RNA-DNA hybrids. In Shewanella loihica (strain ATCC BAA-1088 / PV-4), this protein is Ribonuclease HII.